Consider the following 68-residue polypeptide: Protein transport protein Sec61 subunit gamma (68 aa).

Over 1-32 the chain is Cytoplasmic; that stretch reads MDQIMQFVEPSRQFVKDSIRLVKRCTKPDRKE. A helical transmembrane segment spans residues 33 to 61; that stretch reads FQKIAMATAIGFAIMGFIGFFVKLIHIPI. Residues 62–68 are Extracellular-facing; the sequence is NNIIVGG.

It belongs to the SecE/SEC61-gamma family. The SEC61 channel-forming translocon complex consists of channel-forming core components SEC61A1, SEC61B and SEC61G and different auxiliary components such as SEC62 and SEC63. The SEC61 channel associates with the multi-pass translocon (MPT) complex.

Its subcellular location is the endoplasmic reticulum membrane. Component of SEC61 channel-forming translocon complex that mediates transport of signal peptide-containing precursor polypeptides across the endoplasmic reticulum (ER). Forms a ribosome receptor and a gated pore in the ER membrane, both functions required for cotranslational translocation of nascent polypeptides. The SEC61 channel is also involved in ER membrane insertion of transmembrane proteins: it mediates membrane insertion of the first few transmembrane segments of proteins, while insertion of subsequent transmembrane regions of multi-pass membrane proteins is mediated by the multi-pass translocon (MPT) complex. The polypeptide is Protein transport protein Sec61 subunit gamma (sec61g) (Gadus morhua (Atlantic cod)).